We begin with the raw amino-acid sequence, 233 residues long: Ribonuclease 3 (233 aa).

The RNase III domain maps to 8 to 135 (AQRFLEDKQL…VIGAIYLDQG (128 aa)). E48 is a binding site for Mg(2+). D52 is an active-site residue. 2 residues coordinate Mg(2+): D121 and E124. E124 is an active-site residue. The DRBM domain maps to 161-230 (DYKSKLQELV…AQKVLQDNLV (70 aa)).

The protein belongs to the ribonuclease III family. Homodimer. The cofactor is Mg(2+).

The protein localises to the cytoplasm. The catalysed reaction is Endonucleolytic cleavage to 5'-phosphomonoester.. Its function is as follows. Digests double-stranded RNA. Involved in the processing of primary rRNA transcript to yield the immediate precursors to the large and small rRNAs (23S and 16S). Processes some mRNAs, and tRNAs when they are encoded in the rRNA operon. Processes pre-crRNA and tracrRNA of type II CRISPR loci if present in the organism. The polypeptide is Ribonuclease 3 (Syntrophomonas wolfei subsp. wolfei (strain DSM 2245B / Goettingen)).